We begin with the raw amino-acid sequence, 234 residues long: Leucyl/phenylalanyl-tRNA--protein transferase (234 aa).

Belongs to the L/F-transferase family.

The protein resides in the cytoplasm. It carries out the reaction N-terminal L-lysyl-[protein] + L-leucyl-tRNA(Leu) = N-terminal L-leucyl-L-lysyl-[protein] + tRNA(Leu) + H(+). It catalyses the reaction N-terminal L-arginyl-[protein] + L-leucyl-tRNA(Leu) = N-terminal L-leucyl-L-arginyl-[protein] + tRNA(Leu) + H(+). The catalysed reaction is L-phenylalanyl-tRNA(Phe) + an N-terminal L-alpha-aminoacyl-[protein] = an N-terminal L-phenylalanyl-L-alpha-aminoacyl-[protein] + tRNA(Phe). Its function is as follows. Functions in the N-end rule pathway of protein degradation where it conjugates Leu, Phe and, less efficiently, Met from aminoacyl-tRNAs to the N-termini of proteins containing an N-terminal arginine or lysine. In Nitrosomonas eutropha (strain DSM 101675 / C91 / Nm57), this protein is Leucyl/phenylalanyl-tRNA--protein transferase.